Consider the following 276-residue polypeptide: Shikimate dehydrogenase (NADP(+)) (276 aa).

Shikimate-binding positions include 15–17 and Thr62; that span reads SKS. The Proton acceptor role is filled by Lys66. Residues Asn87 and Asp103 each coordinate shikimate. Residues 127-131, 151-156, and Met215 contribute to the NADP(+) site; these read GAGGA and NRTLSK. Shikimate is bound at residue Tyr217. Gly239 provides a ligand contact to NADP(+).

Belongs to the shikimate dehydrogenase family. As to quaternary structure, homodimer.

It catalyses the reaction shikimate + NADP(+) = 3-dehydroshikimate + NADPH + H(+). It functions in the pathway metabolic intermediate biosynthesis; chorismate biosynthesis; chorismate from D-erythrose 4-phosphate and phosphoenolpyruvate: step 4/7. Its function is as follows. Involved in the biosynthesis of the chorismate, which leads to the biosynthesis of aromatic amino acids. Catalyzes the reversible NADPH linked reduction of 3-dehydroshikimate (DHSA) to yield shikimate (SA). This Cellvibrio japonicus (strain Ueda107) (Pseudomonas fluorescens subsp. cellulosa) protein is Shikimate dehydrogenase (NADP(+)).